We begin with the raw amino-acid sequence, 132 residues long: Small ribosomal subunit protein uS9 (132 aa).

The tract at residues 104–132 is disordered; it reads GYLTRDPRMKERKKYGLRKARRAPQFSKR. The segment covering 113 to 132 has biased composition (basic residues); sequence KERKKYGLRKARRAPQFSKR.

It belongs to the universal ribosomal protein uS9 family.

This chain is Small ribosomal subunit protein uS9, found in Natranaerobius thermophilus (strain ATCC BAA-1301 / DSM 18059 / JW/NM-WN-LF).